A 681-amino-acid chain; its full sequence is Probable glutamate carboxypeptidase LAMP1 (681 aa).

Residues 1 to 6 (MSKSKS) lie on the Cytoplasmic side of the membrane. Residues 7–24 (LAFVIAALSYSFFSLFSS) traverse the membrane as a helical; Signal-anchor for type II membrane protein segment. Over 25–681 (PPKSHYHELF…ASLVLKGELI (657 aa)) the chain is Extracellular. N-linked (GlcNAc...) asparagine glycosylation is found at asparagine 42, asparagine 140, asparagine 166, and asparagine 299. The segment at 241–527 (SVDGCERLSD…SVLGLVALRL (287 aa)) is catalytic. Zn(2+) contacts are provided by histidine 333 and aspartate 343. The active-site Nucleophile is the glutamate 380. Zn(2+)-binding residues include glutamate 381 and aspartate 409. Asparagine 441 carries N-linked (GlcNAc...) asparagine glycosylation. Histidine 493 contacts Zn(2+). Asparagine 536 carries N-linked (GlcNAc...) asparagine glycosylation.

This sequence belongs to the peptidase M28 family. M28B subfamily. Zn(2+) serves as cofactor.

Its subcellular location is the endoplasmic reticulum membrane. The enzyme catalyses Release of an unsubstituted, C-terminal glutamyl residue, typically from Ac-Asp-Glu or folylpoly-gamma-glutamates.. Acts in association with AMP1 to suppress ectopic stem cell niche formation in the shoot apical meristem (SAM) independently of cytokinin signaling pathway. The sequence is that of Probable glutamate carboxypeptidase LAMP1 from Arabidopsis thaliana (Mouse-ear cress).